The following is a 347-amino-acid chain: Haptoglobin (347 aa).

The N-terminal stretch at 1-18 is a signal peptide; sequence MSDLGAVVALLLWGQLFA. The Sushi domain maps to 31 to 88; sequence DGCPKPPMIANGYVEHLVRYQCKNYYRLRTEGDGVYTLNNEKQWTNKAVGDKLPECEA. Cystine bridges form between C52–C86 and C90–C207. Residues 103–347 form a serine protease region; the sequence is ILGGHLDAKG…DWVQKTIAEN (245 aa). 5 N-linked (GlcNAc...) asparagine glycosylation sites follow: N125, N148, N152, N182, and N232. 2 disulfides stabilise this stretch: C250/C281 and C292/C322. The interval 259 to 264 is interaction with CD163; sequence VPEKKT.

It belongs to the peptidase S1 family. Tetramer of two alpha and two beta chains; disulfide-linked. The hemoglobin/haptoglobin complex is composed of a haptoglobin dimer bound to two hemoglobin alpha-beta dimers. Interacts with CD163. Interacts with ERGIC3. Expressed by the liver and secreted in plasma.

Its subcellular location is the secreted. As a result of hemolysis, hemoglobin is found to accumulate in the kidney and is secreted in the urine. Haptoglobin captures, and combines with free plasma hemoglobin to allow hepatic recycling of heme iron and to prevent kidney damage. Haptoglobin also acts as an antioxidant, has antibacterial activity and plays a role in modulating many aspects of the acute phase response. Hemoglobin/haptoglobin complexes are rapidly cleared by the macrophage CD163 scavenger receptor expressed on the surface of liver Kupfer cells through an endocytic lysosomal degradation pathway. This Papio hamadryas (Hamadryas baboon) protein is Haptoglobin (HP).